The following is a 535-amino-acid chain: T-box transcription factor TBX21 (535 aa).

The tract at residues 1–62 (MGIVEPGCGD…SLGSPYPGGA (62 aa)) is disordered. Ser-53 is subject to Phosphoserine. Tyr-77 is modified (phosphotyrosine). A disordered region spans residues 83–109 (AAGFPGAGESFPPPADAEGYQPGEGYA). Tyr-118 is subject to Phosphotyrosine. The segment at residues 141 to 326 (LNNHLLWSKF…NNPFAKGFRE (186 aa)) is a DNA-binding region (T-box). Phosphotyrosine; by ABL1 is present on Tyr-220. Position 225 is a phosphoserine (Ser-225). Tyr-266 carries the phosphotyrosine; by ABL1 modification. Phosphothreonine is present on Thr-303. The residue at position 305 (Tyr-305) is a Phosphotyrosine; by ABL1. Residue Lys-314 forms a Glycyl lysine isopeptide (Lys-Gly) (interchain with G-Cter in ubiquitin) linkage. The tract at residues 449-535 (RPMRTLPMEP…EGQFYNYFPN (87 aa)) is disordered. The segment covering 503 to 520 (SPYPSSGDSSSPAGAPSP) has biased composition (low complexity). The residue at position 513 (Ser-513) is a Phosphoserine. Phosphotyrosine; by ITK is present on Tyr-530.

Interacts with RUNX1, RUNX3, ITK, ABL1, RELA, CDK9 and KDM6B. The phosphorylated form (at Thr-303) interacts with NFATC2. Interacts with SMARCA4 in a KDM6B-dependent manner. Interacts with CCTN1. Interacts with USP10. The phosphorylated form (at Tyr-530) interacts with GATA3. Phosphorylations at Ser-53, Tyr-77, Ser-225 and Ser-513 are regulated by mTORC1. Phosphorylation at Tyr-530 is essential for its interaction GATA3. Phosphorylation at Tyr-220, Tyr-266 and Tyr-305 enhances its transcriptional activator activity. Phosphorylation at Thr-303 is required for its interaction with NFATC2. In terms of processing, ubiquitinated at Lys-314, leading to its degradation by the proteasome. Ubiquitination is essential for controlling protein stability, binding to the T-box-binding element of the IFN-gamma promoter, and for interaction with NFATC2 through induction of phosphorylation at Thr-303. Deubiquitinated by USP10 leading to its stabilization. In terms of tissue distribution, T-cell specific.

The protein resides in the nucleus. Its function is as follows. Lineage-defining transcription factor which initiates Th1 lineage development from naive Th precursor cells both by activating Th1 genetic programs and by repressing the opposing Th2 and Th17 genetic programs. Activates transcription of a set of genes important for Th1 cell function, including those encoding IFN-gamma and the chemokine receptor CXCR3. Induces permissive chromatin accessibilty and CpG methylation in IFNG. Activates IFNG and CXCR3 genes in part by recruiting chromatin remodeling complexes including KDM6B, a SMARCA4-containing SWI/SNF-complex, and an H3K4me2-methyltransferase complex to their promoters and all of these complexes serve to establish a more permissive chromatin state conducive with transcriptional activation. Can activate Th1 genes also via recruitment of Mediator complex and P-TEFb (composed of CDK9 and CCNT1/cyclin-T1) in the form of the super elongation complex (SEC) to super-enhancers and associated genes in activated Th1 cells. Inhibits the Th17 cell lineage commitment by blocking RUNX1-mediated transactivation of Th17 cell-specific transcriptinal regulator RORC. Inhibits the Th2 cell lineage commitment by suppressing the production of Th2 cytokines, such as IL-4, IL-5, and IL- 13, via repression of transcriptional regulators GATA3 and NFATC2. Protects Th1 cells from amplifying aberrant type-I IFN response in an IFN-gamma abundant microenvironment by acting as a repressor of type-I IFN transcription factors and type-I IFN-stimulated genes. Acts as a regulator of antiviral B-cell responses; controls chronic viral infection by promoting the antiviral antibody IgG2a isotype switching and via regulation of a broad antiviral gene expression program. Required for the correct development of natural killer (NK) and mucosal-associated invariant T (MAIT) cells. The polypeptide is T-box transcription factor TBX21 (TBX21) (Homo sapiens (Human)).